Consider the following 130-residue polypeptide: Ribosome-binding factor A (130 aa).

Belongs to the RbfA family. Monomer. Binds 30S ribosomal subunits, but not 50S ribosomal subunits or 70S ribosomes.

The protein resides in the cytoplasm. Its function is as follows. One of several proteins that assist in the late maturation steps of the functional core of the 30S ribosomal subunit. Associates with free 30S ribosomal subunits (but not with 30S subunits that are part of 70S ribosomes or polysomes). Required for efficient processing of 16S rRNA. May interact with the 5'-terminal helix region of 16S rRNA. The chain is Ribosome-binding factor A from Methylibium petroleiphilum (strain ATCC BAA-1232 / LMG 22953 / PM1).